The following is a 234-amino-acid chain: Leucyl/phenylalanyl-tRNA--protein transferase (234 aa).

It belongs to the L/F-transferase family.

It localises to the cytoplasm. It catalyses the reaction N-terminal L-lysyl-[protein] + L-leucyl-tRNA(Leu) = N-terminal L-leucyl-L-lysyl-[protein] + tRNA(Leu) + H(+). It carries out the reaction N-terminal L-arginyl-[protein] + L-leucyl-tRNA(Leu) = N-terminal L-leucyl-L-arginyl-[protein] + tRNA(Leu) + H(+). The catalysed reaction is L-phenylalanyl-tRNA(Phe) + an N-terminal L-alpha-aminoacyl-[protein] = an N-terminal L-phenylalanyl-L-alpha-aminoacyl-[protein] + tRNA(Phe). In terms of biological role, functions in the N-end rule pathway of protein degradation where it conjugates Leu, Phe and, less efficiently, Met from aminoacyl-tRNAs to the N-termini of proteins containing an N-terminal arginine or lysine. This is Leucyl/phenylalanyl-tRNA--protein transferase from Myxococcus xanthus (strain DK1622).